A 346-amino-acid polypeptide reads, in one-letter code: Histidinol-phosphate aminotransferase (346 aa).

Lys209 carries the N6-(pyridoxal phosphate)lysine modification.

It belongs to the class-II pyridoxal-phosphate-dependent aminotransferase family. Histidinol-phosphate aminotransferase subfamily. In terms of assembly, homodimer. It depends on pyridoxal 5'-phosphate as a cofactor.

It carries out the reaction L-histidinol phosphate + 2-oxoglutarate = 3-(imidazol-4-yl)-2-oxopropyl phosphate + L-glutamate. It functions in the pathway amino-acid biosynthesis; L-histidine biosynthesis; L-histidine from 5-phospho-alpha-D-ribose 1-diphosphate: step 7/9. In Flavobacterium psychrophilum (strain ATCC 49511 / DSM 21280 / CIP 103535 / JIP02/86), this protein is Histidinol-phosphate aminotransferase.